Reading from the N-terminus, the 562-residue chain is NAD-dependent malic enzyme (562 aa).

The active-site Proton donor is the Tyr101. An NAD(+)-binding site is contributed by Arg154. Lys172 acts as the Proton acceptor in catalysis. A divalent metal cation is bound by residues Glu243, Asp244, and Asp267. Positions 267 and 415 each coordinate NAD(+).

This sequence belongs to the malic enzymes family. As to quaternary structure, homotetramer. It depends on Mg(2+) as a cofactor. Mn(2+) serves as cofactor.

The enzyme catalyses (S)-malate + NAD(+) = pyruvate + CO2 + NADH. It catalyses the reaction oxaloacetate + H(+) = pyruvate + CO2. The polypeptide is NAD-dependent malic enzyme (Idiomarina loihiensis (strain ATCC BAA-735 / DSM 15497 / L2-TR)).